Reading from the N-terminus, the 921-residue chain is Collagen alpha-1(IX) chain (921 aa).

Positions 1–23 are cleaved as a signal peptide; it reads MKNFWKISVFFCVCSCLGPWVSA. Positions 24-268 are nonhelical region (NC4); it reads TLKRRARFPA…ITTSQTTDER (245 aa). Disulfide bonds link Cys-44–Cys-242 and Cys-198–Cys-252. The 195-residue stretch at 50 to 244 folds into the Laminin G-like domain; the sequence is GQDDLPGFDL…LQWMLIHCDP (195 aa). Asp-213, Asp-215, and His-253 together coordinate Zn(2+). Disordered stretches follow at residues 253–759 and 783–921; these read HELP…APTD and RPDT…GPDK. 8 consecutive Collagen-like domains span residues 269-325, 326-356, 358-403, 416-472, 473-512, 604-656, 657-711, and 712-755; these read GPPG…PGAD, GLTGPDGSPGSVGPRGQKGEPGVPGSRGFPG, GIPG…GTIG, PPGR…GLRG, ITGIVGDKGEKGARGFDGEPGPQGIPGAAGDQGQRGPPGE, GKPG…LPGP, PGLP…PGEP, and GLRG…PPGR. The interval 269–405 is triple-helical region (COL3); it reads GPPGEQGPPG…PGPSGTIGFH (137 aa). Composition is skewed to pro residues over residues 273–285 and 298–310; these read EQGPPGPPGPPGV and KGPPGPPGPPGDP. Low complexity predominate over residues 368-383; sequence TTGLPGELGRVGPIGD. Pro residues predominate over residues 387–398; that stretch reads RGPPGPPGPPGP. Residues 406-417 are nonhelical region (NC3); sequence DGDPLCPNSCPP. A triple-helical region (COL2) region spans residues 418 to 756; it reads GRSGYPGLPG…PGIQGPPGRA (339 aa). A compositionally biased stretch (basic and acidic residues) spans 479–489; sequence DKGEKGARGFD. Low complexity-rich tracts occupy residues 594-632 and 639-650; these read PGKPGQLGSSGKPGQQGPPGEVGPRGPRGLPGSRGPVGP and PGKLGSVGSPGL. The interval 757–786 is nonhelical region (NC2); that stretch reads PTDQHIKQVCMRVVQEHFVEMAASLKRPDT. The interval 787–901 is triple-helical region (COL1); the sequence is GASGLPGRPG…PGPPGPPGFC (115 aa). A Collagen-like 9 domain is found at 790 to 847; the sequence is GLPGRPGPPGPPGPPGENGFPGQMGIRGLPGIKGPPGALGLRGPKGDLGEKGERGPPG. The segment covering 794–804 has biased composition (pro residues); the sequence is RPGPPGPPGPP. Over residues 833 to 845 the composition is skewed to basic and acidic residues; sequence PKGDLGEKGERGP. The span at 888 to 900 shows a compositional bias: pro residues; sequence VPGPPGPPGPPGF. Residues 902–921 are nonhelical region (NC1); sequence EPASCTLQSGQRAFSKGPDK.

This sequence belongs to the fibril-associated collagens with interrupted helices (FACIT) family. In terms of assembly, heterotrimer of an alpha 1(IX), an alpha 2(IX) and an alpha 3(IX) chain. Post-translationally, covalently linked to the telopeptides of type II collagen by lysine-derived cross-links. In terms of processing, prolines at the third position of the tripeptide repeating unit (G-X-Y) are hydroxylated in some or all of the chains.

The protein resides in the secreted. Its subcellular location is the extracellular space. The protein localises to the extracellular matrix. Functionally, structural component of hyaline cartilage and vitreous of the eye. In Mus musculus (Mouse), this protein is Collagen alpha-1(IX) chain (Col9a1).